The primary structure comprises 156 residues: 6,7-dimethyl-8-ribityllumazine synthase (156 aa).

5-amino-6-(D-ribitylamino)uracil is bound by residues Phe-23, Ala-57 to Glu-59, and Ala-81 to Ile-83. Ser-86 to Thr-87 contributes to the (2S)-2-hydroxy-3-oxobutyl phosphate binding site. Catalysis depends on His-89, which acts as the Proton donor. Phe-114 provides a ligand contact to 5-amino-6-(D-ribitylamino)uracil. Residue Arg-128 participates in (2S)-2-hydroxy-3-oxobutyl phosphate binding.

The protein belongs to the DMRL synthase family.

The catalysed reaction is (2S)-2-hydroxy-3-oxobutyl phosphate + 5-amino-6-(D-ribitylamino)uracil = 6,7-dimethyl-8-(1-D-ribityl)lumazine + phosphate + 2 H2O + H(+). The protein operates within cofactor biosynthesis; riboflavin biosynthesis; riboflavin from 2-hydroxy-3-oxobutyl phosphate and 5-amino-6-(D-ribitylamino)uracil: step 1/2. Functionally, catalyzes the formation of 6,7-dimethyl-8-ribityllumazine by condensation of 5-amino-6-(D-ribitylamino)uracil with 3,4-dihydroxy-2-butanone 4-phosphate. This is the penultimate step in the biosynthesis of riboflavin. The protein is 6,7-dimethyl-8-ribityllumazine synthase of Campylobacter fetus subsp. fetus (strain 82-40).